Here is a 321-residue protein sequence, read N- to C-terminus: MKNYARISCTSRYVPENCVTNHQLSEMMDTSDEWIHSRTGISERRIVTQENTSDLCHQVAKQLLEKSGKQASEIDFILVATVTPDFNMPSVACQVQGAIGATEAFAFDISAACSGFVYALSMAEKLVLSGRYQTGLVIGGETFSKMLDWTDRSTAVLFGDGAAGVLIEAAETPHFLNEKLQADGQRWAALTSGYTINESPFYQGHKQASKTLQMEGRSIFDFAIKDVSQNILSLVTDETVDYLLLHQANVRIIDKIARKTKISREKFLTNMDKYGNTSAASIPILLDEAVENGTLILGSQQRVVLTGFGGGLTWGSLLLTL.

Residues Cys113 and His246 contribute to the active site. An ACP-binding region spans residues 247 to 251 (QANVR). Asn276 is an active-site residue.

The protein belongs to the thiolase-like superfamily. FabH family. Homodimer.

Its subcellular location is the cytoplasm. The catalysed reaction is malonyl-[ACP] + acetyl-CoA + H(+) = 3-oxobutanoyl-[ACP] + CO2 + CoA. It participates in lipid metabolism; fatty acid biosynthesis. Functionally, catalyzes the condensation reaction of fatty acid synthesis by the addition to an acyl acceptor of two carbons from malonyl-ACP. Catalyzes the first condensation reaction which initiates fatty acid synthesis and may therefore play a role in governing the total rate of fatty acid production. Possesses both acetoacetyl-ACP synthase and acetyl transacylase activities. Its substrate specificity determines the biosynthesis of branched-chain and/or straight-chain of fatty acids. The polypeptide is Beta-ketoacyl-[acyl-carrier-protein] synthase III (Enterococcus faecalis (strain ATCC 700802 / V583)).